The following is a 254-amino-acid chain: 3-deoxy-manno-octulosonate cytidylyltransferase (254 aa).

It belongs to the KdsB family.

It localises to the cytoplasm. It catalyses the reaction 3-deoxy-alpha-D-manno-oct-2-ulosonate + CTP = CMP-3-deoxy-beta-D-manno-octulosonate + diphosphate. Its pathway is nucleotide-sugar biosynthesis; CMP-3-deoxy-D-manno-octulosonate biosynthesis; CMP-3-deoxy-D-manno-octulosonate from 3-deoxy-D-manno-octulosonate and CTP: step 1/1. The protein operates within bacterial outer membrane biogenesis; lipopolysaccharide biosynthesis. In terms of biological role, activates KDO (a required 8-carbon sugar) for incorporation into bacterial lipopolysaccharide in Gram-negative bacteria. The chain is 3-deoxy-manno-octulosonate cytidylyltransferase from Haemophilus influenzae (strain 86-028NP).